Here is a 218-residue protein sequence, read N- to C-terminus: uncharacterized protein (218 aa).

2 stretches are compositionally biased toward polar residues: residues 1–21 and 68–102; these read MSSQQQESEASGYNTSASSEF and LNTSNDSNLVRNTARSPDSSMNGRPQTRRSTSSDI. Disordered stretches follow at residues 1–39, 63–116, and 170–205; these read MSSQQQESEASGYNTSASSEFGSLEDSHQFVSPVTRHAS, EKRL…STSG, and GAKRKMATPSQSLKRQEKQSPLESRHGGLRSRGTPQ. Residues 183 to 195 are compositionally biased toward basic and acidic residues; the sequence is KRQEKQSPLESRH.

This is an uncharacterized protein from Caenorhabditis elegans.